The following is a 67-amino-acid chain: Large ribosomal subunit protein bL31c (67 aa).

This sequence belongs to the bacterial ribosomal protein bL31 family. Type A subfamily. As to quaternary structure, part of the 50S ribosomal subunit.

The protein resides in the plastid. It is found in the chloroplast. Binds the 23S rRNA. This chain is Large ribosomal subunit protein bL31c (rpl31), found in Cyanidioschyzon merolae (strain NIES-3377 / 10D) (Unicellular red alga).